The sequence spans 83 residues: Cytochrome b559 subunit alpha (83 aa).

Residues 21–35 (VIHSITIPSLFIAGW) form a helical membrane-spanning segment. Histidine 23 provides a ligand contact to heme.

It belongs to the PsbE/PsbF family. Heterodimer of an alpha subunit and a beta subunit. PSII is composed of 1 copy each of membrane proteins PsbA, PsbB, PsbC, PsbD, PsbE, PsbF, PsbH, PsbI, PsbJ, PsbK, PsbL, PsbM, PsbT, PsbX, PsbY, PsbZ, Psb30/Ycf12, at least 3 peripheral proteins of the oxygen-evolving complex and a large number of cofactors. It forms dimeric complexes. Requires heme b as cofactor.

Its subcellular location is the plastid. The protein resides in the chloroplast thylakoid membrane. In terms of biological role, this b-type cytochrome is tightly associated with the reaction center of photosystem II (PSII). PSII is a light-driven water:plastoquinone oxidoreductase that uses light energy to abstract electrons from H(2)O, generating O(2) and a proton gradient subsequently used for ATP formation. It consists of a core antenna complex that captures photons, and an electron transfer chain that converts photonic excitation into a charge separation. The protein is Cytochrome b559 subunit alpha of Helianthus annuus (Common sunflower).